A 274-amino-acid chain; its full sequence is Large ribosomal subunit protein uL2 (274 aa).

The disordered stretch occupies residues 224 to 274 (AMNPVDHPHGGGEGRTGEGQVPVSPWNTMTKGYRTRSNKRTQTFIVSRRKK). Positions 229-239 (DHPHGGGEGRT) are enriched in basic and acidic residues.

The protein belongs to the universal ribosomal protein uL2 family. As to quaternary structure, part of the 50S ribosomal subunit. Forms a bridge to the 30S subunit in the 70S ribosome.

Functionally, one of the primary rRNA binding proteins. Required for association of the 30S and 50S subunits to form the 70S ribosome, for tRNA binding and peptide bond formation. It has been suggested to have peptidyltransferase activity; this is somewhat controversial. Makes several contacts with the 16S rRNA in the 70S ribosome. This Methylibium petroleiphilum (strain ATCC BAA-1232 / LMG 22953 / PM1) protein is Large ribosomal subunit protein uL2.